The sequence spans 255 residues: Triosephosphate isomerase (255 aa).

Residue 9–11 (NWK) participates in substrate binding. His95 acts as the Electrophile in catalysis. The active-site Proton acceptor is the Glu167. Substrate-binding positions include Gly173, Ser212, and 233-234 (GG).

Belongs to the triosephosphate isomerase family. Homodimer.

It localises to the cytoplasm. It catalyses the reaction D-glyceraldehyde 3-phosphate = dihydroxyacetone phosphate. It participates in carbohydrate biosynthesis; gluconeogenesis. Its pathway is carbohydrate degradation; glycolysis; D-glyceraldehyde 3-phosphate from glycerone phosphate: step 1/1. Functionally, involved in the gluconeogenesis. Catalyzes stereospecifically the conversion of dihydroxyacetone phosphate (DHAP) to D-glyceraldehyde-3-phosphate (G3P). In Klebsiella pneumoniae, this protein is Triosephosphate isomerase.